Here is a 357-residue protein sequence, read N- to C-terminus: COP9 signalosome complex subunit 5a (357 aa).

At Met-1 the chain carries N-acetylmethionine. An MPN domain is found at 59-196 (VHISALALLK…IGAFRTYPEG (138 aa)). 3 residues coordinate Zn(2+): His-142, His-144, and Asp-155. Residues 142-155 (HSHPGYGCWLSGID) carry the JAMM motif motif. A disordered region spans residues 338 to 357 (ARQSKKSADDSSDPEPMITS).

The protein belongs to the peptidase M67A family. CSN5 subfamily. Component of the CSN complex, probably composed of CSN1, CSN2, CSN3, CSN4, CSN5 (CSN5A or CSN5B), CSN6 (CSN6A or CSN6B), CSN7 and CSN8. CSN5A or CSN5B are present within distinct CSN complexes each containing only one copy of CSN5. Interacts with itself. In the complex, it is located in the center and probably interacts directly with CSN4 and CSN6A or CSN6B. Present also in subcomplex forms which inculdes CSN3. Also exists as monomeric form. Interacts with CYT1 in vitro, but not in planta. It depends on a divalent metal cation as a cofactor. In terms of tissue distribution, ubiquitously expressed. Highly expressed in flowers and roots. Expressed at lower level in seedlings and siliques.

The protein localises to the cytoplasm. It localises to the nucleus. In terms of biological role, probable protease subunit of the COP9 signalosome complex (CSN), a complex involved in various cellular and developmental processes such as photomorphogenesis and auxin and jasmonate responses. The CSN complex is an essential regulator of the ubiquitin (Ubl) conjugation pathway by mediating the deneddylation of the cullin subunits of the SCF-type E3 ligase complexes, leading to decrease the Ubl ligase activity of SCF. In the complex, it probably acts as the catalytic center that mediates the cleavage of Nedd8 from cullins. It however has no metalloprotease activity by itself and requires the other subunits of the CSN complex. The CSN complex is involved in repression of photomorphogenesis in darkness by regulating the activity of COP1-containing Ubl ligase complexes. The complex is also required for degradation of PSIAA6 by regulating the activity of the Ubl ligase SCF-TIR complex. Involved in CSN's deneddylation/derubylation activity. Required for the deneddylation of all cullins. Essential for the structural integrity of the CSN holocomplex. The sequence is that of COP9 signalosome complex subunit 5a from Arabidopsis thaliana (Mouse-ear cress).